Consider the following 557-residue polypeptide: Membrane protein insertase YidC (557 aa).

A helical transmembrane segment spans residues 7-27 (ILLVALAVVSYLLVLQWNQDY). A disordered region spans residues 42 to 77 (ASPALPETVPGDSSTSADVPTAGSGNQVPDSAASTA). Positions 52–77 (GDSSTSADVPTAGSGNQVPDSAASTA) are enriched in polar residues. The next 3 helical transmembrane spans lie at 370-390 (WGWSIIVLTVIIKLAFFPLSA), 436-456 (LGGCLPILVQMPVFLALYWVL), and 514-534 (PIIFTFFFLWFPAGLVLYWVV).

The protein belongs to the OXA1/ALB3/YidC family. Type 1 subfamily. As to quaternary structure, interacts with the Sec translocase complex via SecD. Specifically interacts with transmembrane segments of nascent integral membrane proteins during membrane integration.

It is found in the cell inner membrane. Required for the insertion and/or proper folding and/or complex formation of integral membrane proteins into the membrane. Involved in integration of membrane proteins that insert both dependently and independently of the Sec translocase complex, as well as at least some lipoproteins. Aids folding of multispanning membrane proteins. This is Membrane protein insertase YidC from Azotobacter vinelandii (strain DJ / ATCC BAA-1303).